A 156-amino-acid chain; its full sequence is MRIGMGYDVHKLVENRDLILGGVKIPYEKGLLGHSDADVLLHAIMDSLLGAAALGDIGKHFPDTDPKYKGADSIKLLEFVGELLNKNNYKISNIDATIIAQRPKMAPHIPTMRENIAKALNIDLDQINVKATTEEGLGFTGSGEGISSQSICLLVK.

2 residues coordinate a divalent metal cation: D8 and H10. Residues 8–10 (DVH) and 34–35 (HS) contribute to the 4-CDP-2-C-methyl-D-erythritol 2-phosphate site. Residue H42 participates in a divalent metal cation binding. Residues 56-58 (DIG), 61-65 (FPDTD), 100-106 (AQRPKMA), 132-135 (TTEE), and F139 each bind 4-CDP-2-C-methyl-D-erythritol 2-phosphate.

It belongs to the IspF family. Homotrimer. The cofactor is a divalent metal cation.

It carries out the reaction 4-CDP-2-C-methyl-D-erythritol 2-phosphate = 2-C-methyl-D-erythritol 2,4-cyclic diphosphate + CMP. It participates in isoprenoid biosynthesis; isopentenyl diphosphate biosynthesis via DXP pathway; isopentenyl diphosphate from 1-deoxy-D-xylulose 5-phosphate: step 4/6. Functionally, involved in the biosynthesis of isopentenyl diphosphate (IPP) and dimethylallyl diphosphate (DMAPP), two major building blocks of isoprenoid compounds. Catalyzes the conversion of 4-diphosphocytidyl-2-C-methyl-D-erythritol 2-phosphate (CDP-ME2P) to 2-C-methyl-D-erythritol 2,4-cyclodiphosphate (ME-CPP) with a corresponding release of cytidine 5-monophosphate (CMP). The polypeptide is 2-C-methyl-D-erythritol 2,4-cyclodiphosphate synthase (Clostridium perfringens (strain ATCC 13124 / DSM 756 / JCM 1290 / NCIMB 6125 / NCTC 8237 / Type A)).